Reading from the N-terminus, the 445-residue chain is Trigger factor (445 aa).

A PPIase FKBP-type domain is found at 164 to 249; the sequence is GDQVTFDFEG…VKKVEEAKLP (86 aa).

The protein belongs to the FKBP-type PPIase family. Tig subfamily.

It localises to the cytoplasm. It carries out the reaction [protein]-peptidylproline (omega=180) = [protein]-peptidylproline (omega=0). In terms of biological role, involved in protein export. Acts as a chaperone by maintaining the newly synthesized protein in an open conformation. Functions as a peptidyl-prolyl cis-trans isomerase. The protein is Trigger factor of Psychrobacter sp. (strain PRwf-1).